Here is a 493-residue protein sequence, read N- to C-terminus: Proline--tRNA ligase (493 aa).

The protein belongs to the class-II aminoacyl-tRNA synthetase family. ProS type 3 subfamily. As to quaternary structure, homodimer.

It is found in the cytoplasm. The enzyme catalyses tRNA(Pro) + L-proline + ATP = L-prolyl-tRNA(Pro) + AMP + diphosphate. Functionally, catalyzes the attachment of proline to tRNA(Pro) in a two-step reaction: proline is first activated by ATP to form Pro-AMP and then transferred to the acceptor end of tRNA(Pro). The polypeptide is Proline--tRNA ligase (Parabacteroides distasonis (strain ATCC 8503 / DSM 20701 / CIP 104284 / JCM 5825 / NCTC 11152)).